A 259-amino-acid chain; its full sequence is Aspartate/glutamate leucyltransferase (259 aa).

This sequence belongs to the R-transferase family. Bpt subfamily.

It is found in the cytoplasm. The enzyme catalyses N-terminal L-glutamyl-[protein] + L-leucyl-tRNA(Leu) = N-terminal L-leucyl-L-glutamyl-[protein] + tRNA(Leu) + H(+). The catalysed reaction is N-terminal L-aspartyl-[protein] + L-leucyl-tRNA(Leu) = N-terminal L-leucyl-L-aspartyl-[protein] + tRNA(Leu) + H(+). In terms of biological role, functions in the N-end rule pathway of protein degradation where it conjugates Leu from its aminoacyl-tRNA to the N-termini of proteins containing an N-terminal aspartate or glutamate. The chain is Aspartate/glutamate leucyltransferase from Rhizobium meliloti (strain 1021) (Ensifer meliloti).